The chain runs to 582 residues: MTRLIRSKKQFLIRSLHSVFYYLGSLLHSTFEMNVFIGLLLATVVASQSSEGRDESYTYKQLCIVDDKPQVLDGFDCRNQVAVARWQNAVNTTGWTFLEVETKENYCPQLQAYSAGYLEGLLSKTVLTYHLKNAQEDYCKNFTGYCSRLSDFLTENQKWIQSSLETVAPDDLYWGAVNRTYHQVSGLIDAYEGREFKPRITYELHPILYLNLNGDFYDLEKKLNKTRDPAFEQTGGKCSGLIKVAPGNADLFISQVTMSGFQNMLRVIKLYKFGYDRQFYPGYASSFSSYPGLLYSSDDFALQTSGLAVIETTISVFNTSLFENTKPVGQLPTWIRAIVSNQLARDAREWCKLYSLYNSGTYNNQWAVLDYKKFKPNQPLPKNGLFYVLEQMPGKIVYSDLTWFVEKYSYFPSYNIPFFKEITEISGFIGQAAKMGDWFKWGASPRAKIFERDHGNVHDLDSLTALMRYNDYKNDEFSKCKCNPPYSAEAGISARGDLNPANGTYEFPGQGHVNHGALDYKGTNVELMKKLQFVAQGGPTWGKVPSFKWSEFDFKDKVNHVGHPDEWKFNTLVHKWETEINA.

A signal peptide spans 1–42; that stretch reads MTRLIRSKKQFLIRSLHSVFYYLGSLLHSTFEMNVFIGLLLA. N-linked (GlcNAc...) asparagine glycosylation is found at N91, N141, N178, N224, and N318. The cysteines at positions 139 and 146 are disulfide-linked. A disulfide bridge links C480 with C482. N502 is a glycosylation site (N-linked (GlcNAc...) asparagine).

It belongs to the phospholipase B-like family.

The protein resides in the secreted. Functionally, putative phospholipase. In Caenorhabditis elegans, this protein is Putative phospholipase B-like 2.